The following is a 457-amino-acid chain: MIIYNTLTRSKELFVPLDVNNVKIYVCGPTVYDFAHIGNSRSIVIYDILFRLLNVLYPKVTYIRNITDIDDKIINVAQNNNQNIYDVTARYIKAFNEDMGRLNCLKPTYEPRATENIDVMLALIEKLINYGHAYICDNTVFFDIESYPAYGKLSGRNIMELIYGSRIDIEVGKKHPGDFVLWKPATDIDNKLMSCWPSPWGVGRPGWHIECSAMSYNYLGENFDIHGGGADLQFPHHENELAQSCCAFPNSYYAKYWIHNGFLTVNHEKMSKSLGNFLTVRQLLDSGIRGEVIRYIFLSTHYRKPLDWNDNVVSNAQESLNRIYMALNVTDERLLLDDVEVSDEIISCLKDDMNTPKAIAVLHEMVTRINKASDIDKKVYFIKVLIKSANFLGILYHSWQEWFKVDNDQDIIQLIHERKMAKTNGDFRKADRIRQILLDKGIVLSDNKDGTTLWYRS.

A Zn(2+)-binding site is contributed by Cys27. The 'HIGH' region signature appears at 29–39 (PTVYDFAHIGN). Residues Cys211, His236, and Glu240 each contribute to the Zn(2+) site. The 'KMSKS' region motif lies at 269–273 (KMSKS). Lys272 contacts ATP.

It belongs to the class-I aminoacyl-tRNA synthetase family. As to quaternary structure, monomer. It depends on Zn(2+) as a cofactor.

The protein resides in the cytoplasm. It carries out the reaction tRNA(Cys) + L-cysteine + ATP = L-cysteinyl-tRNA(Cys) + AMP + diphosphate. The sequence is that of Cysteine--tRNA ligase from Ehrlichia ruminantium (strain Welgevonden).